The following is a 241-amino-acid chain: MNPMGRKWANIVAKKTAKDGANSKIYAKFGVEIYVAAKQGEPDPESNSALKFVLERAKQAQVPKHVIDKAIDKAKGNTDETFVEGRYEGFGPNGSMIIVDTLTSNVNRTAANVRTAFGKNGGNMGASGSVSYMFDKKGVIVFAGEDADAIFEQLLEADVDVEDVEAEDGTITVYTEPTDLHKALEALRANGQEEFQVTELEMIPQTEVTLEGEDLETFKGLIDALEADDDVQKVYHNVADM.

This sequence belongs to the TACO1 family. YeeN subfamily.

The protein localises to the cytoplasm. In Streptococcus thermophilus (strain ATCC BAA-250 / LMG 18311), this protein is Probable transcriptional regulatory protein stu0195.